The chain runs to 939 residues: MANMRVHELAKELNITSKDITDMLSNSEKTYKPVSGLTDAEISSVRKKFAPAPKVENKPAAQPAKQSQPVKNDNRDNRQQNQAPKQPQQGTQNKSGNADDKKHISQVYFPQNSSRDKNSRRDNNNRDGQRDNNGGYRNNDRNNGGYRNNDRGNNGYRNNDRNNNGGYGNRDNNGGYRNNDRNNNGGYGNRDNNGGYRNNDRNNGGYRNNDRNNNGGYGNRDNNGGYRNNDRNNNGGYGNRDNNGGYRNNDRNNNGGFRNDRNGQSGNGGFRKDNDQNRGGFNGGQRRNNDRRDSAPKEEFDFSAKPDSRRHDSRIDSKKNDRKRDNEAKENLKFANSRFDKKPMTKPEKKEKEEETIKQLVLPDTLTIKELADKMKVAPAALVKKLFLQGKVVTINEEIDYDAAEEIALEFNCICEHEEKVDVIAELLKEDEEPEDKLVPRPPVVCVMGHVDHGKTSLLDAIRETHVTAKESGGITQKIGAYQVNVNGNLITFLDTPGHEAFTAMRMRGAQATDIAILVVAADDGVMPQTIEAINHAKAAGVEIIVAVNKIDKPNANIEKVKQELTEYGLIAEDWGGSTTFVPVSAHTKQGIDELLDMILLTAEVNELKANPDRKARGIVIEAELDKGRGPVASILVQKGTLHVGDAVSAGSCYGKIRAMIDDKGNRVKVAGPSTPVEILGLNDVPNAGEIIMAADSEKEARSIAETFISEGRKKLLDDTKHKVSLDALFEQIQAGNMKELNIIIKADVQGSVEAVKSSLVRLSNEEVVVKVIHGGVGNVNESDVVLASASNAIIIAFNVKPDNQARIVAEREKVDLRLYSVIYNAIEDVEAALKGMLEPIYEEKIIGHARIMQIFKASGVGNIAGCIVEEGRITRDSVVRITRGSEKVYEGPIASLKHFKDEVKEIKAGTECGMVFEKFNDIQPEDMIEAHIMVEVPR.

Residues 48–355 form a disordered region; the sequence is KFAPAPKVEN…KPEKKEKEEE (308 aa). Positions 79 to 93 are enriched in low complexity; it reads QQNQAPKQPQQGTQN. Residues 114 to 130 show a composition bias toward basic and acidic residues; it reads SRDKNSRRDNNNRDGQR. Low complexity predominate over residues 131–257; sequence DNNGGYRNND…NNDRNNNGGF (127 aa). Residues 287 to 355 are compositionally biased toward basic and acidic residues; that stretch reads RNNDRRDSAP…KPEKKEKEEE (69 aa). Residues 440–609 enclose the tr-type G domain; the sequence is PRPPVVCVMG…LLTAEVNELK (170 aa). Residues 449 to 456 are G1; the sequence is GHVDHGKT. 449 to 456 is a GTP binding site; it reads GHVDHGKT. Residues 474-478 are G2; sequence GITQK. A G3 region spans residues 495–498; it reads DTPG. Residues 495 to 499 and 549 to 552 contribute to the GTP site; these read DTPGH and NKID. A G4 region spans residues 549 to 552; sequence NKID. The G5 stretch occupies residues 585-587; the sequence is SAH.

This sequence belongs to the TRAFAC class translation factor GTPase superfamily. Classic translation factor GTPase family. IF-2 subfamily.

The protein resides in the cytoplasm. Its function is as follows. One of the essential components for the initiation of protein synthesis. Protects formylmethionyl-tRNA from spontaneous hydrolysis and promotes its binding to the 30S ribosomal subunits. Also involved in the hydrolysis of GTP during the formation of the 70S ribosomal complex. In Lachnospira eligens (strain ATCC 27750 / DSM 3376 / VPI C15-48 / C15-B4) (Eubacterium eligens), this protein is Translation initiation factor IF-2.